A 122-amino-acid polypeptide reads, in one-letter code: Succinate dehydrogenase assembly factor 2, mitochondrial (122 aa).

It belongs to the SDHAF2 family. As to quaternary structure, interacts with the flavoprotein subunit within the SDH catalytic dimer.

It is found in the mitochondrion matrix. Its function is as follows. Plays an essential role in the assembly of succinate dehydrogenase (SDH), an enzyme complex (also referred to as respiratory complex II) that is a component of both the tricarboxylic acid (TCA) cycle and the mitochondrial electron transport chain, and which couples the oxidation of succinate to fumarate with the reduction of ubiquinone (coenzyme Q) to ubiquinol. Required for flavinylation (covalent attachment of FAD) of the flavoprotein subunit of the SDH catalytic dimer. The protein is Succinate dehydrogenase assembly factor 2, mitochondrial of Caenorhabditis briggsae.